The primary structure comprises 601 residues: MQNDRKKHTRNFSIVAHIDHGKSTLADRLLEATGTLTQREMENQVLDKMELEKERGITIKSQAARLVYKRDDGEEYILNLIDTPGHVDFNYEVSRSLAACEGAILVVDATQGIQAQTLANCYLALDHDLEIVPVINKIDLPSARPDEVKEEIEDVIGIEAHDAPLVSAKTGLNIKDVLEAIVEKVPVPDGDEEAPLKALIFDSYYDSYKGVVCYVRIKDGVVKPGTKIKFMATNKEYEVTETGIFTPNFFPMKELRAGDVGYITASIKNLRDAGVGDTITEASRPAKEPLEGYRPAIPMVYSGIYPVDGAKYEELKEALEKLKLNDAALSYEPETSIALGFGFRCGFLGLLHMEIIQERIEREFNLDIITTAPSVIYNIYKRDGEMLKITNPTNMPDPTEIEKMEEPVVKASIITPSDFVGAVMELCQNKRGTFIDMEYIETTRVVVNYYIPLNEIIYDFFDMLKSKTKGYASLDYELNGYKQAKLVKLDMLLNGDVVDALSMIVPEERAYNKGRAIAEKLKEVIPRQMFEIPIQAAVGAKIIARETVKAMRKDVLAKCYGGDISRKRKLLEKQKEGKKRMRQIGSVEVPQEAFMSILKVD.

The region spanning 7 to 189 (KHTRNFSIVA…AIVEKVPVPD (183 aa)) is the tr-type G domain. GTP is bound by residues 19–24 (DHGKST) and 136–139 (NKID).

This sequence belongs to the TRAFAC class translation factor GTPase superfamily. Classic translation factor GTPase family. LepA subfamily.

The protein resides in the cell membrane. It catalyses the reaction GTP + H2O = GDP + phosphate + H(+). In terms of biological role, required for accurate and efficient protein synthesis under certain stress conditions. May act as a fidelity factor of the translation reaction, by catalyzing a one-codon backward translocation of tRNAs on improperly translocated ribosomes. Back-translocation proceeds from a post-translocation (POST) complex to a pre-translocation (PRE) complex, thus giving elongation factor G a second chance to translocate the tRNAs correctly. Binds to ribosomes in a GTP-dependent manner. This is Elongation factor 4 from Clostridium novyi (strain NT).